The sequence spans 785 residues: Mitochondrial intermediate peptidase (785 aa).

The N-terminal 27 residues, 1–27 (MLKAVMPRPWVCSRCVKRQIQSSRGLA), are a transit peptide targeting the mitochondrion. The tract at residues 26–52 (LATASTQYREPRPVPTDHSAPGAKHDD) is disordered. His-566 contacts Zn(2+). Glu-567 is a catalytic residue. Zn(2+) is bound by residues His-570 and His-573.

The protein belongs to the peptidase M3 family. Requires Zn(2+) as cofactor.

The protein localises to the mitochondrion matrix. The enzyme catalyses Release of an N-terminal octapeptide as second stage of processing of some proteins imported into the mitochondrion.. Cleaves proteins, imported into the mitochondrion, to their mature size. While most mitochondrial precursor proteins are processed to the mature form in one step by mitochondrial processing peptidase (MPP), the sequential cleavage by MIP of an octapeptide after initial processing by MPP is a required step for a subgroup of nuclear-encoded precursor proteins destined for the matrix or the inner membrane. This is Mitochondrial intermediate peptidase (oct1) from Sclerotinia sclerotiorum (strain ATCC 18683 / 1980 / Ss-1) (White mold).